The chain runs to 86 residues: Small ribosomal subunit protein uS17 (86 aa).

The protein belongs to the universal ribosomal protein uS17 family. Part of the 30S ribosomal subunit.

Its function is as follows. One of the primary rRNA binding proteins, it binds specifically to the 5'-end of 16S ribosomal RNA. This Roseiflexus sp. (strain RS-1) protein is Small ribosomal subunit protein uS17.